We begin with the raw amino-acid sequence, 214 residues long: Pyrrolidone-carboxylate peptidase (214 aa).

Active-site residues include E78, C141, and H165.

It belongs to the peptidase C15 family. Homotetramer.

Its subcellular location is the cytoplasm. The catalysed reaction is Release of an N-terminal pyroglutamyl group from a polypeptide, the second amino acid generally not being Pro.. Functionally, removes 5-oxoproline from various penultimate amino acid residues except L-proline. The chain is Pyrrolidone-carboxylate peptidase from Streptococcus pneumoniae serotype 2 (strain D39 / NCTC 7466).